The chain runs to 340 residues: tRNA N6-adenosine threonylcarbamoyltransferase (340 aa).

The Fe cation site is built by histidine 111 and histidine 115. Substrate-binding positions include 134 to 138 (LVSGG), aspartate 167, glycine 180, and asparagine 276. Aspartate 304 is a binding site for Fe cation.

The protein belongs to the KAE1 / TsaD family. Requires Fe(2+) as cofactor.

The protein resides in the cytoplasm. The enzyme catalyses L-threonylcarbamoyladenylate + adenosine(37) in tRNA = N(6)-L-threonylcarbamoyladenosine(37) in tRNA + AMP + H(+). Required for the formation of a threonylcarbamoyl group on adenosine at position 37 (t(6)A37) in tRNAs that read codons beginning with adenine. Is involved in the transfer of the threonylcarbamoyl moiety of threonylcarbamoyl-AMP (TC-AMP) to the N6 group of A37, together with TsaE and TsaB. TsaD likely plays a direct catalytic role in this reaction. This Helicobacter pylori (strain G27) protein is tRNA N6-adenosine threonylcarbamoyltransferase.